Consider the following 328-residue polypeptide: D-cysteine desulfhydrase (328 aa).

Lys-51 carries the post-translational modification N6-(pyridoxal phosphate)lysine.

It belongs to the ACC deaminase/D-cysteine desulfhydrase family. As to quaternary structure, homodimer. Pyridoxal 5'-phosphate serves as cofactor.

It catalyses the reaction D-cysteine + H2O = hydrogen sulfide + pyruvate + NH4(+) + H(+). Its function is as follows. Catalyzes the alpha,beta-elimination reaction of D-cysteine and of several D-cysteine derivatives. It could be a defense mechanism against D-cysteine. This is D-cysteine desulfhydrase from Klebsiella pneumoniae subsp. pneumoniae (strain ATCC 700721 / MGH 78578).